The sequence spans 333 residues: Protein farnesyltransferase/geranylgeranyltransferase type-1 subunit alpha (333 aa).

PFTA repeat units follow at residues 61–95 (LSSR…SLKV), 96–130 (DLHV…KLGP), 132–166 (ARNS…NLGG), 167–200 (WEDE…RSPV), and 207–241 (MRES…DEST).

This sequence belongs to the protein prenyltransferase subunit alpha family. As to quaternary structure, heterodimer of FTA and FTB (farnesyltransferase). Heterodimer of an alpha and a beta subunit. Mg(2+) is required as a cofactor.

It carries out the reaction L-cysteinyl-[protein] + (2E,6E)-farnesyl diphosphate = S-(2E,6E)-farnesyl-L-cysteinyl-[protein] + diphosphate. The catalysed reaction is geranylgeranyl diphosphate + L-cysteinyl-[protein] = S-geranylgeranyl-L-cysteinyl-[protein] + diphosphate. In terms of biological role, essential subunit of both the farnesyltransferase and the geranylgeranyltransferase complex. Contributes to the transfer of a farnesyl or geranylgeranyl moiety from farnesyl or geranylgeranyl diphosphate to a cysteine at the fourth position from the C-terminus of several proteins having the C-terminal sequence Cys-aliphatic-aliphatic-X. The chain is Protein farnesyltransferase/geranylgeranyltransferase type-1 subunit alpha (FTA) from Pisum sativum (Garden pea).